The following is a 451-amino-acid chain: Interferon-related developmental regulator 1 (451 aa).

Residues 1-10 (MPKNKKRNTP) are compositionally biased toward basic residues. The disordered stretch occupies residues 1-69 (MPKNKKRNTP…PSSFAEDGPE (69 aa)). Low complexity predominate over residues 23–33 (AAAATAATAGG). Over residues 49–61 (ETMSHCSGYSDPS) the composition is skewed to polar residues.

Belongs to the IFRD family. As to quaternary structure, interacts with PSIP1/LEDGF. As to expression, expressed in a variety of tissues.

Its function is as follows. Could play a role in regulating gene activity in the proliferative and/or differentiative pathways induced by NGF. May be an autocrine factor that attenuates or amplifies the initial ligand-induced signal. The protein is Interferon-related developmental regulator 1 (IFRD1) of Homo sapiens (Human).